The primary structure comprises 865 residues: Protein translocase subunit SecA (865 aa).

Residues Q93, 111–115 (GEGKT), and D501 each bind ATP. Residues C841, C843, C852, and C853 each coordinate Zn(2+).

This sequence belongs to the SecA family. As to quaternary structure, monomer and homodimer. Part of the essential Sec protein translocation apparatus which comprises SecA, SecYEG and auxiliary proteins SecDF-YajC and YidC. The cofactor is Zn(2+).

The protein localises to the cell inner membrane. Its subcellular location is the cytoplasm. The catalysed reaction is ATP + H2O + cellular proteinSide 1 = ADP + phosphate + cellular proteinSide 2.. In terms of biological role, part of the Sec protein translocase complex. Interacts with the SecYEG preprotein conducting channel. Has a central role in coupling the hydrolysis of ATP to the transfer of proteins into and across the cell membrane, serving as an ATP-driven molecular motor driving the stepwise translocation of polypeptide chains across the membrane. This Helicobacter acinonychis (strain Sheeba) protein is Protein translocase subunit SecA.